We begin with the raw amino-acid sequence, 346 residues long: D-fructose 1,6-bisphosphatase class 2/sedoheptulose 1,7-bisphosphatase 1 (346 aa).

Residues Asp33, Glu57, Asp97, and Glu100 each coordinate Mn(2+). Substrate-binding positions include 100 to 102, Tyr131, 176 to 178, and 198 to 200; these read EGT, RAR, and DGD. Glu225 contributes to the Mn(2+) binding site.

This sequence belongs to the FBPase class 2 family. As to quaternary structure, homotetramer. It depends on Mn(2+) as a cofactor.

The enzyme catalyses beta-D-fructose 1,6-bisphosphate + H2O = beta-D-fructose 6-phosphate + phosphate. It catalyses the reaction D-sedoheptulose 1,7-bisphosphate + H2O = D-sedoheptulose 7-phosphate + phosphate. The protein operates within carbohydrate biosynthesis; Calvin cycle. Catalyzes the hydrolysis of fructose 1,6-bisphosphate (Fru 1,6-P2) and sedoheptulose 1,7-bisphosphate (Sed 1,7-P2) to fructose 6-phosphate and sedoheptulose 7-phosphate, respectively. The sequence is that of D-fructose 1,6-bisphosphatase class 2/sedoheptulose 1,7-bisphosphatase 1 from Acaryochloris marina (strain MBIC 11017).